A 29-amino-acid chain; its full sequence is Trypsin inhibitor 2 (29 aa).

Cystine bridges form between Cys3/Cys20, Cys10/Cys22, and Cys16/Cys28.

It belongs to the protease inhibitor I7 (squash-type serine protease inhibitor) family.

It localises to the secreted. Functionally, inhibits trypsin. This Bryonia dioica (Red bryony) protein is Trypsin inhibitor 2.